A 154-amino-acid polypeptide reads, in one-letter code: 6,7-dimethyl-8-ribityllumazine synthase (154 aa).

5-amino-6-(D-ribitylamino)uracil-binding positions include Trp22, Ala56–Glu58, and Cys80–Val82. Position 85–86 (Asp85–Thr86) interacts with (2S)-2-hydroxy-3-oxobutyl phosphate. Residue His88 is the Proton donor of the active site. Position 113 (Asn113) interacts with 5-amino-6-(D-ribitylamino)uracil. Residue Arg127 participates in (2S)-2-hydroxy-3-oxobutyl phosphate binding.

Belongs to the DMRL synthase family. As to quaternary structure, forms an icosahedral capsid composed of 60 subunits, arranged as a dodecamer of pentamers.

It catalyses the reaction (2S)-2-hydroxy-3-oxobutyl phosphate + 5-amino-6-(D-ribitylamino)uracil = 6,7-dimethyl-8-(1-D-ribityl)lumazine + phosphate + 2 H2O + H(+). It functions in the pathway cofactor biosynthesis; riboflavin biosynthesis; riboflavin from 2-hydroxy-3-oxobutyl phosphate and 5-amino-6-(D-ribitylamino)uracil: step 1/2. Its function is as follows. Catalyzes the formation of 6,7-dimethyl-8-ribityllumazine by condensation of 5-amino-6-(D-ribitylamino)uracil with 3,4-dihydroxy-2-butanone 4-phosphate. This is the penultimate step in the biosynthesis of riboflavin. The protein is 6,7-dimethyl-8-ribityllumazine synthase of Xylella fastidiosa (strain 9a5c).